The primary structure comprises 427 residues: Phosphatidylinositol 4-phosphate 5-kinase 10 (427 aa).

The PIPK domain maps to 1 to 419 (MFTREITAKD…RFQDFVSQIF (419 aa)). Disordered regions lie at residues 247 to 287 (SRGS…DSEN) and 334 to 355 (MKIP…VGKQ). The segment at 379 to 400 (YGVRKRLEHCYKSIQHSSKTIS) is activation loop.

It carries out the reaction a 1,2-diacyl-sn-glycero-3-phospho-(1D-myo-inositol 4-phosphate) + ATP = a 1,2-diacyl-sn-glycero-3-phospho-(1D-myo-inositol-4,5-bisphosphate) + ADP + H(+). The polypeptide is Phosphatidylinositol 4-phosphate 5-kinase 10 (PIP5K10) (Arabidopsis thaliana (Mouse-ear cress)).